The primary structure comprises 31 residues: Cyclotide hyen-I (31 aa).

The segment at residues 1–31 is a cross-link (cyclopeptide (Gly-Asp)); the sequence is GSTPCGESCVWIPCISGIVGCSCSNKVCYMD. Intrachain disulfides connect Cys5–Cys21, Cys9–Cys23, and Cys14–Cys28.

In terms of processing, this is a cyclic peptide. Detected in seeds (at protein level).

Functionally, probably participates in a plant defense mechanism. This is Cyclotide hyen-I from Pigea enneasperma (Spade flower).